A 229-amino-acid polypeptide reads, in one-letter code: Ribonuclease 3 (229 aa).

In terms of domain architecture, RNase III spans 7 to 132 (ISAFCDRIGH…VIAAVYRDAG (126 aa)). E45 contributes to the Mg(2+) binding site. Residue D49 is part of the active site. D118 and E121 together coordinate Mg(2+). E121 is a catalytic residue. The DRBM domain occupies 157-226 (DPKTALQEWA…AKALLAQVES (70 aa)).

The protein belongs to the ribonuclease III family. As to quaternary structure, homodimer. Requires Mg(2+) as cofactor.

It is found in the cytoplasm. The enzyme catalyses Endonucleolytic cleavage to 5'-phosphomonoester.. Functionally, digests double-stranded RNA. Involved in the processing of primary rRNA transcript to yield the immediate precursors to the large and small rRNAs (23S and 16S). Processes some mRNAs, and tRNAs when they are encoded in the rRNA operon. Processes pre-crRNA and tracrRNA of type II CRISPR loci if present in the organism. The protein is Ribonuclease 3 of Dinoroseobacter shibae (strain DSM 16493 / NCIMB 14021 / DFL 12).